Here is an 877-residue protein sequence, read N- to C-terminus: Leucine--tRNA ligase (877 aa).

The short motif at 43 to 53 (PYPSGRIHMGH) is the 'HIGH' region element. The short motif at 628–632 (KMSKS) is the 'KMSKS' region element. Lysine 631 provides a ligand contact to ATP.

The protein belongs to the class-I aminoacyl-tRNA synthetase family.

The protein localises to the cytoplasm. The enzyme catalyses tRNA(Leu) + L-leucine + ATP = L-leucyl-tRNA(Leu) + AMP + diphosphate. The sequence is that of Leucine--tRNA ligase from Brucella melitensis biotype 2 (strain ATCC 23457).